The sequence spans 976 residues: Metabotropic glutamate receptor (976 aa).

The first 25 residues, 1-25 (MKQKNNNGTILVVVMVLSWSRVVDL), serve as a signal peptide directing secretion. The Extracellular portion of the chain corresponds to 26–626 (KSPSNTHTQD…IQYMKWNSLF (601 aa)). 2 N-linked (GlcNAc...) asparagine glycosylation sites follow: asparagine 112 and asparagine 143. L-glutamate-binding positions include serine 158 and 179–181 (AST). Asparagine 216 carries N-linked (GlcNAc...) asparagine glycosylation. Tyrosine 229 serves as a coordination point for L-glutamate. N-linked (GlcNAc...) asparagine glycosylation occurs at asparagine 299. Aspartate 310 serves as a coordination point for L-glutamate. N-linked (GlcNAc...) asparagine glycosylation occurs at asparagine 386. L-glutamate is bound at residue lysine 417. Asparagine 491 and asparagine 524 each carry an N-linked (GlcNAc...) asparagine glycan. Residues 627-649 (ALIPMAIAIFGIALTSIVIVLFA) traverse the membrane as a helical segment. The Cytoplasmic segment spans residues 650–663 (KNHDTPLVRASGRE). A helical transmembrane segment spans residues 664 to 684 (LSYTLLFGILVCYCNTFALIA). The Extracellular portion of the chain corresponds to 685-695 (KPTIGSCVLQR). Residues 696 to 714 (FGIGVGFSIIYSALLTKTN) traverse the membrane as a helical segment. Residues 715 to 738 (RISRIFHSASKSAQRLKYISPQSQ) lie on the Cytoplasmic side of the membrane. A helical membrane pass occupies residues 739 to 759 (VVITTSLIAIQVLITMIWMVV). Topologically, residues 760 to 782 (EPPGTRFYYPDRREVILKCKIQD) are extracellular. A helical transmembrane segment spans residues 783-804 (MSFLFSQLYNMILITICTIYAI). Topologically, residues 805–817 (KTRKIPENFNESK) are cytoplasmic. The chain crosses the membrane as a helical span at residues 818-840 (FIGFTMYTTCIIWLAFVPIYFGT). The Extracellular portion of the chain corresponds to 841–850 (GNSYEVQTTT). A helical transmembrane segment spans residues 851–876 (LCISISLSASVALVCLYSPKVYILVF). Residues 877–976 (HPDKNVRKLT…VEPICHIVNK (100 aa)) lie on the Cytoplasmic side of the membrane. Residues 920-946 (LTGGAVGTNASSSTLPTQNSPHLDEAS) are disordered. A compositionally biased stretch (polar residues) spans 927–946 (TNASSSTLPTQNSPHLDEAS).

Belongs to the G-protein coupled receptor 3 family. In terms of tissue distribution, expressed in the neurons of the larval CNS from the beginning of the first until the third instar. Expression in the third-instar larval CNS is restricted to a discrete number of somas and projections in the brain lobes and in the ventral ganglion. In the ventral nerve cord, expression is detected both in somas and projections. Expressed in the antennal lobes, the optic lobes, the central complex and the median bundle in the adult CNS.

The protein resides in the cell membrane. Functionally, G-protein coupled receptor for glutamate. Ligand binding causes a conformation change that triggers signaling via guanine nucleotide-binding proteins (G proteins) and modulates the activity of down-stream effectors. This Drosophila melanogaster (Fruit fly) protein is Metabotropic glutamate receptor (mGluR).